Here is a 298-residue protein sequence, read N- to C-terminus: Ribosomal RNA small subunit methyltransferase A (298 aa).

Residues Asn35, Leu37, Gly62, Glu83, Asp108, and Asn133 each contribute to the S-adenosyl-L-methionine site.

This sequence belongs to the class I-like SAM-binding methyltransferase superfamily. rRNA adenine N(6)-methyltransferase family. RsmA subfamily.

It localises to the cytoplasm. It carries out the reaction adenosine(1518)/adenosine(1519) in 16S rRNA + 4 S-adenosyl-L-methionine = N(6)-dimethyladenosine(1518)/N(6)-dimethyladenosine(1519) in 16S rRNA + 4 S-adenosyl-L-homocysteine + 4 H(+). Its function is as follows. Specifically dimethylates two adjacent adenosines (A1518 and A1519) in the loop of a conserved hairpin near the 3'-end of 16S rRNA in the 30S particle. May play a critical role in biogenesis of 30S subunits. The chain is Ribosomal RNA small subunit methyltransferase A from Streptococcus pyogenes serotype M12 (strain MGAS9429).